The following is a 157-amino-acid chain: Ribosome maturation factor RimP (157 aa).

It belongs to the RimP family.

It localises to the cytoplasm. In terms of biological role, required for maturation of 30S ribosomal subunits. This Streptococcus thermophilus (strain ATCC BAA-491 / LMD-9) protein is Ribosome maturation factor RimP.